The primary structure comprises 81 residues: uncharacterized protein (81 aa).

The next 2 membrane-spanning stretches (helical) occupy residues 4–24 and 61–81; these read IFKMSFAVIIIILALIAFNYT and NIYTAVFVWSVSLIGFTLHII.

It is found in the cell membrane. This is an uncharacterized protein from Bacillus subtilis (strain 168).